We begin with the raw amino-acid sequence, 31 residues long: Photosystem II reaction center protein T (31 aa).

Residues 3 to 23 (SFAYILILTLAIATLFFAIAF) form a helical membrane-spanning segment.

This sequence belongs to the PsbT family. PSII is composed of 1 copy each of membrane proteins PsbA, PsbB, PsbC, PsbD, PsbE, PsbF, PsbH, PsbI, PsbJ, PsbK, PsbL, PsbM, PsbT, PsbX, PsbY, PsbZ, Psb30/Ycf12, peripheral proteins PsbO, CyanoQ (PsbQ), PsbU, PsbV and a large number of cofactors. It forms dimeric complexes.

Its subcellular location is the cellular thylakoid membrane. Functionally, found at the monomer-monomer interface of the photosystem II (PS II) dimer, plays a role in assembly and dimerization of PSII. PSII is a light-driven water plastoquinone oxidoreductase, using light energy to abstract electrons from H(2)O, generating a proton gradient subsequently used for ATP formation. This chain is Photosystem II reaction center protein T, found in Synechococcus sp. (strain WH7803).